The chain runs to 325 residues: Taste receptor type 2 member 7 (325 aa).

At 1–9 the chain is on the extracellular side; sequence MADKVQTTL. The helical transmembrane segment at 10 to 30 threads the bilayer; that stretch reads LFLAVGEFSVGILGNAFIGLV. Over 31–55 the chain is Cytoplasmic; sequence NCMDWVKKRKIASIDLILTSLAISR. Residues 56–76 traverse the membrane as a helical segment; it reads ICLLCVILLDCFILVLYPDVY. At 77–94 the chain is on the extracellular side; it reads ATGKEMRIIDFFWTLTNH. The chain crosses the membrane as a helical span at residues 95 to 115; it reads LSIWFATCLSIYYFFRIANFF. Residues 116–128 are Cytoplasmic-facing; it reads HPLFLWMKWRIDR. A helical transmembrane segment spans residues 129–149; that stretch reads VISWILLGCVVLSVFISLPAT. Residues 150 to 187 lie on the Extracellular side of the membrane; that stretch reads ENLNADFRFCVKAKRKTNLTWSCRVNKTQHASTKLFLN. 2 N-linked (GlcNAc...) asparagine glycosylation sites follow: asparagine 167 and asparagine 175. Residues 188–208 traverse the membrane as a helical segment; sequence LATLLPFCVCLMSFFLLILSL. Residues 209 to 235 are Cytoplasmic-facing; it reads RRHIRRMQLSATGCRDPSTEAHVRALK. Residues 236–256 form a helical membrane-spanning segment; it reads AVISFLLLFIAYYLSFLVATS. Over 257–266 the chain is Extracellular; sequence SYFMPETELA. The chain crosses the membrane as a helical span at residues 267 to 287; sequence VIFGESIALIYPSSHSFILIL. Residues 288–319 lie on the Cytoplasmic side of the membrane; that stretch reads GNNKLRHASLKVIWKVMSILKGRKFQQHKQIG.

It belongs to the G-protein coupled receptor T2R family.

Its subcellular location is the membrane. Functionally, gustducin-coupled receptor implicated in the perception of bitter compounds in the oral cavity and the gastrointestinal tract. Signals through PLCB2 and the calcium-regulated cation channel TRPM5. This chain is Taste receptor type 2 member 7 (TAS2R7), found in Pan paniscus (Pygmy chimpanzee).